A 96-amino-acid chain; its full sequence is HIG1 domain family member 1C (96 aa).

The Cytoplasmic portion of the chain corresponds to 1 to 26; it reads MSSDEWSAAEDEGQLSRLLRKSRDSP. Residues 1–91 enclose the HIG1 domain; that stretch reads MSSDEWSAAE…YKDYIRPRFF (91 aa). Residues 27-44 form a helical membrane-spanning segment; the sequence is FVPVGMAGFVAVLSYGLY. Residues 45 to 58 lie on the Extracellular side of the membrane; that stretch reads KLNSRREQKMSLHL. Residues 59-81 traverse the membrane as a helical segment; sequence IHVRVAAQGCVVGAVTLGVLYSM. At 82 to 96 the chain is on the cytoplasmic side; that stretch reads YKDYIRPRFFNVPKK.

Its subcellular location is the membrane. The chain is HIG1 domain family member 1C (Higd1c) from Mus musculus (Mouse).